The following is a 138-amino-acid chain: Transcription antitermination protein NusB (138 aa).

The protein belongs to the NusB family.

In terms of biological role, involved in transcription antitermination. Required for transcription of ribosomal RNA (rRNA) genes. Binds specifically to the boxA antiterminator sequence of the ribosomal RNA (rrn) operons. The chain is Transcription antitermination protein NusB from Helicobacter pylori (strain G27).